Consider the following 446-residue polypeptide: Exodeoxyribonuclease 7 large subunit (446 aa).

This sequence belongs to the XseA family. Heterooligomer composed of large and small subunits.

It is found in the cytoplasm. It carries out the reaction Exonucleolytic cleavage in either 5'- to 3'- or 3'- to 5'-direction to yield nucleoside 5'-phosphates.. In terms of biological role, bidirectionally degrades single-stranded DNA into large acid-insoluble oligonucleotides, which are then degraded further into small acid-soluble oligonucleotides. The sequence is that of Exodeoxyribonuclease 7 large subunit from Streptococcus pyogenes serotype M3 (strain ATCC BAA-595 / MGAS315).